A 322-amino-acid polypeptide reads, in one-letter code: Cytochrome f (322 aa).

Positions 1 to 35 are cleaved as a signal peptide; that stretch reads MQTRNTFSWTWIREEITRSISVSLMIYIITWSSIS. Heme-binding residues include Tyr38, Cys58, Cys61, and His62. A helical transmembrane segment spans residues 288–308; sequence VQGLLFFLGSVVLAQIFLVLK.

This sequence belongs to the cytochrome f family. The 4 large subunits of the cytochrome b6-f complex are cytochrome b6, subunit IV (17 kDa polypeptide, petD), cytochrome f and the Rieske protein, while the 4 small subunits are PetG, PetL, PetM and PetN. The complex functions as a dimer. The cofactor is heme.

It localises to the plastid. The protein resides in the chloroplast thylakoid membrane. Its function is as follows. Component of the cytochrome b6-f complex, which mediates electron transfer between photosystem II (PSII) and photosystem I (PSI), cyclic electron flow around PSI, and state transitions. The sequence is that of Cytochrome f from Aethionema cordifolium (Lebanon stonecress).